The sequence spans 1492 residues: Putative leucine-rich repeat-containing protein DDB_G0290503 (1492 aa).

In terms of domain architecture, PH spans 2 to 111 (SILLEGYLEK…WIEGIKDAIK (110 aa)). LRR repeat units lie at residues 123–144 (LDGL…IKHL), 180–204 (IKSL…VEKL), 258–284 (QESL…QFEK), 329–351 (KNQF…SIVD), 352–375 (DKLK…EIDN), 389–413 (ISKI…SIDK), 439–462 (LEKL…ILEI), 519–543 (INEL…NQSS), 551–575 (LNQL…IIER), 579–603 (IDQL…NESS), 632–656 (INEL…NQSS), 728–752 (LDEL…NQSS), 806–830 (LKSL…NQDS), 831–855 (LDEL…NQSS), 895–919 (INEL…NESS), 927–951 (LIQL…IIER), 955–979 (LNQL…NQSS), 1013–1036 (NEKL…NESL), 1044–1068 (FENL…IIDV), 1138–1164 (LQDL…ELKE), and 1210–1232 (NAHL…GFNE). Positions 1272 to 1292 (RSSSSSLHQQQQMISPDLSNS) are disordered. Residues 1274 to 1286 (SSSSLHQQQQMIS) are compositionally biased toward low complexity. LRR repeat units follow at residues 1424-1444 (SSEK…KYFF) and 1445-1468 (AIAR…IFDM).

The polypeptide is Putative leucine-rich repeat-containing protein DDB_G0290503 (Dictyostelium discoideum (Social amoeba)).